We begin with the raw amino-acid sequence, 446 residues long: Exodeoxyribonuclease 7 large subunit (446 aa).

Belongs to the XseA family. Heterooligomer composed of large and small subunits.

Its subcellular location is the cytoplasm. It carries out the reaction Exonucleolytic cleavage in either 5'- to 3'- or 3'- to 5'-direction to yield nucleoside 5'-phosphates.. In terms of biological role, bidirectionally degrades single-stranded DNA into large acid-insoluble oligonucleotides, which are then degraded further into small acid-soluble oligonucleotides. The protein is Exodeoxyribonuclease 7 large subunit of Xanthomonas campestris pv. campestris (strain 8004).